A 122-amino-acid chain; its full sequence is Protein MGF 110-6L (122 aa).

The first 18 residues, 1 to 18, serve as a signal peptide directing secretion; it reads MLVIFLGILGLMASQVLG. Asparagine 100 carries N-linked (GlcNAc...) asparagine; by host glycosylation. A Prevents secretion from ER motif is present at residues 119 to 122; that stretch reads KDEL.

It belongs to the asfivirus MGF 110 family. Post-translationally, N-glycosylated.

Its subcellular location is the host endoplasmic reticulum lumen. Functionally, plays a role in virus cell tropism, and may be required for efficient virus replication in macrophages. The polypeptide is Protein MGF 110-6L (Ornithodoros (relapsing fever ticks)).